A 604-amino-acid chain; its full sequence is Sulfite reductase [NADPH] flavoprotein alpha-component (604 aa).

The Flavodoxin-like domain maps to 66-204; sequence VTVLSASQTG…AADGWTGRIV (139 aa). Residues 72-77, 119-122, and 155-164 each bind FMN; these read SQTGNA, STQG, and LGDSSYPNFC. Residues 212–231 are disordered; it reads AKNRATPAPQTTPPAGLQTA. The span at 216-231 shows a compositional bias: low complexity; that stretch reads ATPAPQTTPPAGLQTA. An FAD-binding FR-type domain is found at 239-453; the sequence is ADPFPAALLA…VERNDGFRLP (215 aa). Residues T327, Q361, 391 to 394, 409 to 411, and 424 to 427 each bind FAD; these read RLYS, TVG, and GGAS. NADP(+)-binding positions include 524–525, 530–534, and D566; these read SR and KIYVQ. Y604 is a binding site for FAD.

This sequence belongs to the NADPH-dependent sulphite reductase flavoprotein subunit CysJ family. In the N-terminal section; belongs to the flavodoxin family. The protein in the C-terminal section; belongs to the flavoprotein pyridine nucleotide cytochrome reductase family. In terms of assembly, alpha(8)-beta(8). The alpha component is a flavoprotein, the beta component is a hemoprotein. Requires FAD as cofactor. FMN is required as a cofactor.

The catalysed reaction is hydrogen sulfide + 3 NADP(+) + 3 H2O = sulfite + 3 NADPH + 4 H(+). It functions in the pathway sulfur metabolism; hydrogen sulfide biosynthesis; hydrogen sulfide from sulfite (NADPH route): step 1/1. In terms of biological role, component of the sulfite reductase complex that catalyzes the 6-electron reduction of sulfite to sulfide. This is one of several activities required for the biosynthesis of L-cysteine from sulfate. The flavoprotein component catalyzes the electron flow from NADPH -&gt; FAD -&gt; FMN to the hemoprotein component. This is Sulfite reductase [NADPH] flavoprotein alpha-component from Neisseria meningitidis serogroup C / serotype 2a (strain ATCC 700532 / DSM 15464 / FAM18).